Here is a 110-residue protein sequence, read N- to C-terminus: Eukaryotic translation initiation factor eIF1 (110 aa).

It belongs to the SUI1 family.

In terms of biological role, probably involved in translation. The sequence is that of Eukaryotic translation initiation factor eIF1 from Anopheles gambiae (African malaria mosquito).